The primary structure comprises 290 residues: Phosphoribosylaminoimidazole-succinocarboxamide synthase (290 aa).

It belongs to the SAICAR synthetase family.

It catalyses the reaction 5-amino-1-(5-phospho-D-ribosyl)imidazole-4-carboxylate + L-aspartate + ATP = (2S)-2-[5-amino-1-(5-phospho-beta-D-ribosyl)imidazole-4-carboxamido]succinate + ADP + phosphate + 2 H(+). It functions in the pathway purine metabolism; IMP biosynthesis via de novo pathway; 5-amino-1-(5-phospho-D-ribosyl)imidazole-4-carboxamide from 5-amino-1-(5-phospho-D-ribosyl)imidazole-4-carboxylate: step 1/2. In Haemophilus influenzae (strain ATCC 51907 / DSM 11121 / KW20 / Rd), this protein is Phosphoribosylaminoimidazole-succinocarboxamide synthase (purC).